A 543-amino-acid polypeptide reads, in one-letter code: uncharacterized protein (543 aa).

One can recognise a TRAM domain in the interval 1 to 59 (MLKKNDIVEVEIVDLTHEGAGVAKVDGLVFFVENALPSEKILMRVLKVNKKIGFGKVEK). Gln283, Tyr312, Glu333, and Asp381 together coordinate S-adenosyl-L-methionine. Catalysis depends on Cys408, which acts as the Nucleophile.

Belongs to the class I-like SAM-binding methyltransferase superfamily. RNA M5U methyltransferase family.

This is an uncharacterized protein from Streptococcus pneumoniae serotype 4 (strain ATCC BAA-334 / TIGR4).